Here is a 1073-residue protein sequence, read N- to C-terminus: Self-sufficient cytochrome P450 monooxygenase CYP505AG1 (1073 aa).

Residue Cys409 coordinates heme. The Flavodoxin-like domain occupies 501–644 (VTILYGSNSG…DLENWEDEHL (144 aa)). Residues 507-511 (SNSGT) and 588-620 (VFACGHHDWAKTFYKVPIMIDELLARAGAHRVA) contribute to the FMN site. An FAD-binding FR-type domain is found at 680–909 (HNAVECIVSE…RPCKKQFHLP (230 aa)).

The protein in the N-terminal section; belongs to the cytochrome P450 family. It depends on FAD as a cofactor. Requires FMN as cofactor. The cofactor is heme.

It catalyses the reaction 2 oxidized [cytochrome P450] + NADPH = 2 reduced [cytochrome P450] + NADP(+) + H(+). The catalysed reaction is an organic molecule + reduced [NADPH--hemoprotein reductase] + O2 = an alcohol + oxidized [NADPH--hemoprotein reductase] + H2O + H(+). It carries out the reaction dodecanoate + reduced [NADPH--hemoprotein reductase] + O2 = 10-hydroxydodecanoate + oxidized [NADPH--hemoprotein reductase] + H2O + H(+). The enzyme catalyses tetradecanoate + reduced [NADPH--hemoprotein reductase] + O2 = 12-hydroxytetradecanoate + oxidized [NADPH--hemoprotein reductase] + H2O + H(+). Self-sufficient cytochrome P450 monooxygenase that catalyzes the regioselective in-chain hydroxylation of alkanes, fatty alcohols, and fatty acids, giving sub-terminal hydroxylation by acting preferentially on the omega-2 position. Prefers fatty acids as substrates, since it hydroxylates the small amounts of dodecanoic acid formed in the presence of an excess of 1-dodecanol. The chain is Self-sufficient cytochrome P450 monooxygenase CYP505AG1 from Oidiodendron maius (strain Zn).